The primary structure comprises 206 residues: Dephospho-CoA kinase (206 aa).

Residues 4 to 200 (IVALTGGIGS…AHYLQLASQF (197 aa)) form the DPCK domain. 12–17 (GSGKST) serves as a coordination point for ATP.

The protein belongs to the CoaE family.

Its subcellular location is the cytoplasm. The catalysed reaction is 3'-dephospho-CoA + ATP = ADP + CoA + H(+). Its pathway is cofactor biosynthesis; coenzyme A biosynthesis; CoA from (R)-pantothenate: step 5/5. Catalyzes the phosphorylation of the 3'-hydroxyl group of dephosphocoenzyme A to form coenzyme A. The chain is Dephospho-CoA kinase from Shigella flexneri.